Here is a 667-residue protein sequence, read N- to C-terminus: Flavin-dependent halogenase malA (667 aa).

FAD-binding residues include His-48, Glu-70, Ile-79, and Ser-82. Lys-108 is a catalytic residue. The FAD site is built by Arg-144, Val-168, Asp-399, and Ile-412. Glu-494 serves as a coordination point for substrate. Zn(2+) contacts are provided by Cys-597, Cys-600, Cys-613, and Cys-616. Residues 621 to 646 (TEPQTAVTFDPPLTAEEEALLYAAWN) are flexible region.

This sequence belongs to the flavin-dependent halogenase family. It depends on Zn(2+) as a cofactor.

The catalysed reaction is (+)-premalbrancheamide + 2 FAD + 2 chloride + 4 H(+) = (+)-malbrancheamide + 2 FADH2. It catalyses the reaction (+)-premalbrancheamide + FAD + chloride + 2 H(+) = (+)-malbrancheamide B + FADH2. The enzyme catalyses (+)-premalbrancheamide + FAD + chloride + 2 H(+) = (+)-isomalbrancheamide B + FADH2. It carries out the reaction (+)-malbrancheamide B + FAD + chloride + 2 H(+) = (+)-malbrancheamide + FADH2. The catalysed reaction is (+)-isomalbrancheamide B + FAD + chloride + 2 H(+) = (+)-malbrancheamide + FADH2. It catalyses the reaction (+)-premalbrancheamide + bromide + FAD + 2 H(+) = (+)-malbrancheamide C + FADH2. The enzyme catalyses (+)-premalbrancheamide + bromide + FAD + 2 H(+) = (+)-isomalbrancheamide C + FADH2. It carries out the reaction (+)-malbrancheamide B + bromide + FAD + 2 H(+) = (+)-malbrancheamide D + FADH2. The catalysed reaction is (+)-isomalbrancheamide B + bromide + FAD + 2 H(+) = (+)-isomalbrancheamide D + FADH2. It functions in the pathway alkaloid biosynthesis. Its function is as follows. Flavin-dependent halogenase; part of the gene cluster that mediates the biosynthesis of malbrancheamide, a dichlorinated fungal indole alkaloid that belongs to a family of natural products containing a characteristic bicyclo[2.2.2]diazaoctane core. The first step of malbrancheamide biosynthesis involves coupling of L-proline and L-tryptophan by malG, a bimodular NRPS, to produce L-Pro-L-Trp aldehyde through reductive offloading. This compound undergoes spontaneous cyclization and dehydration to give a dienamine which is reverse prenylated at C-2 by malE. The other prenyltransferase present in the cluster, malB, displays modest activity, suggesting that may be a redundant gene in the pathway. Subsequently, a [4+2] Diels-Alder cyclo-addition catalyzed by the bifunctional enzyme malC forms the characteristic bicyclo[2.2.2]diazaoctane ring of premalbrancheamid. Finally, the flavin-dependent halogenase malA catalyzes the iterative dichlorination of the indole ring of premalbrancheamide to yield C-9 monochlorinated malbrancheamide B, C-8 monochlorinated isomalbrancheamide B, and dichlorinated malbrancheamide. MalA is also able to brominate premalbrancheamide at C-9 to yield malbrancheamide C, and, to a lesser extend, at C-8 to yield isomalbrancheamide C. Finally, malA can brominate C-9 monochlorinated malbrancheamide B at C-8 to yield malbrancheamide D, or C-8 monochlorinated isomalbrancheamide B at C-9 to produce isomalbrancheamide D. The sequence is that of Flavin-dependent halogenase malA from Malbranchea aurantiaca.